The sequence spans 636 residues: Chaperone protein DnaK (636 aa).

Threonine 198 bears the Phosphothreonine; by autocatalysis mark. Residues 602-613 (QPAGEEQAGAAA) show a composition bias toward low complexity. Residues 602–636 (QPAGEEQAGAAAHEGEAKGEKVVDADFEEVKEDKK) are disordered. The span at 614 to 625 (HEGEAKGEKVVD) shows a compositional bias: basic and acidic residues. A compositionally biased stretch (acidic residues) spans 626-636 (ADFEEVKEDKK).

Belongs to the heat shock protein 70 family.

Acts as a chaperone. This is Chaperone protein DnaK from Geotalea daltonii (strain DSM 22248 / JCM 15807 / FRC-32) (Geobacter daltonii).